The following is a 172-amino-acid chain: 3-hydroxydecanoyl-[acyl-carrier-protein] dehydratase (172 aa).

The active site involves histidine 70.

Belongs to the thioester dehydratase family. FabA subfamily. As to quaternary structure, homodimer.

The protein resides in the cytoplasm. The enzyme catalyses a (3R)-hydroxyacyl-[ACP] = a (2E)-enoyl-[ACP] + H2O. It carries out the reaction (3R)-hydroxydecanoyl-[ACP] = (2E)-decenoyl-[ACP] + H2O. The catalysed reaction is (2E)-decenoyl-[ACP] = (3Z)-decenoyl-[ACP]. It participates in lipid metabolism; fatty acid biosynthesis. Necessary for the introduction of cis unsaturation into fatty acids. Catalyzes the dehydration of (3R)-3-hydroxydecanoyl-ACP to E-(2)-decenoyl-ACP and then its isomerization to Z-(3)-decenoyl-ACP. Can catalyze the dehydratase reaction for beta-hydroxyacyl-ACPs with saturated chain lengths up to 16:0, being most active on intermediate chain length. This chain is 3-hydroxydecanoyl-[acyl-carrier-protein] dehydratase, found in Xylella fastidiosa (strain M12).